The sequence spans 884 residues: Androgen receptor (884 aa).

The interval 1-522 is modulating; the sequence is MEVQLGLGRV…PIDYYFPPQK (522 aa). The interaction with ZNF318 stretch occupies residues 1 to 551; it reads MEVQLGLGRV…GSCKVFFKRA (551 aa). 2 disordered regions span residues 33–145 and 174–207; these read VIQN…TLSL and QQQQ…YLGG. 2 stretches are compositionally biased toward low complexity: residues 55–79 and 174–196; these read QQQQ…PQAQ and QQQQ…AAGA. S61 carries the post-translational modification Phosphoserine; by CDK9. Position 75 is a phosphoserine (S75). Residues 197 to 207 show a composition bias toward polar residues; sequence PTSSKDSYLGG. Phosphotyrosine; by CSK is present on Y204. The residue at position 237 (S237) is a Phosphoserine. The residue at position 248 (Y248) is a Phosphotyrosine; by CSK and TNK2. The disordered stretch occupies residues 275–294; it reads DDSADKGTEEPAEYTPFKGS. Phosphotyrosine; by CSK is present on residues Y288, Y327, Y338, and Y343. Phosphotyrosine; by CSK and TNK2 is present on Y344. K367 is covalently cross-linked (Glycyl lysine isopeptide (Lys-Gly) (interchain with G-Cter in SUMO)). Y374 is subject to Phosphotyrosine; by CSK. A Glycyl lysine isopeptide (Lys-Gly) (interchain with G-Cter in SUMO) cross-link involves residue K485. 2 positions are modified to phosphotyrosine; by CSK: Y499 and Y516. Residues 516–883 form an interaction with LPXN region; that stretch reads YYFPPQKTCL…GKVKPIYFHT (368 aa). The nuclear receptor DNA-binding region spans 523-596; it reads TCLICGDEAS…AGMTLGARKL (74 aa). NR C4-type zinc fingers lie at residues 524-544 and 560-584; these read CLIC…CGSC and CASR…LRKC. The interval 536–626 is interaction with HIPK3; that stretch reads YGALTCGSCK…TEESSQKLTV (91 aa). Residues 556–883 are interaction with CCAR1; that stretch reads QKYLCASRND…GKVKPIYFHT (328 aa). An interaction with KAT7 region spans residues 589–883; the sequence is MTLGARKLKK…GKVKPIYFHT (295 aa). S615 bears the Phosphoserine; by STK4/MST1 mark. An NR LBD domain is found at 633–864; sequence ECQPIFLNVL…DFPEMMAEII (232 aa). 17beta-hydroxy-5alpha-androstan-3-one contacts are provided by N670 and R717. Glycyl lysine isopeptide (Lys-Gly) (interchain with G-Cter in ubiquitin) cross-links involve residues K810 and K812. Position 842 (T842) interacts with 17beta-hydroxy-5alpha-androstan-3-one. Y880 carries the post-translational modification Phosphotyrosine; by CSK.

It belongs to the nuclear hormone receptor family. NR3 subfamily. Binds DNA as a homodimer. Part of a ternary complex containing AR, EFCAB6/DJBP and PARK7. Interacts with HIPK3 and NR0B2 in the presence of androgen. The ligand binding domain interacts with KAT7/HBO1 in the presence of dihydrotestosterone. Interacts with EFCAB6/DJBP, PQBP1, RANBP9, RBAK, SPDEF, SRA1, TGFB1I1 and RREB1. Interacts with ZMIZ1/ZIMP10 and ZMIZ2/ZMIP7 which both enhance its transactivation activity. Interacts with SLC30A9 and RAD54L2/ARIP4. Interacts with MACROD1 (via macro domain). Interacts via the ligand-binding domain with LXXLL and FXXLF motifs from NCOA1, NCOA2, NCOA3 and MAGEA11. Interacts (via nuclear receptor DNA binding domain and nuclear receptor ligand binding domain) with NCOA4. The AR N-terminal poly-Gln region binds Ran resulting in enhancement of AR-mediated transactivation. Ran-binding decreases as the poly-Gln length increases. Interacts with HIP1 (via coiled coil domain). Interacts (via ligand-binding domain) with TRIM68. Interacts with TNK2. Interacts with USP26. Interacts with RNF6. Interacts (regulated by RNF6 probably through polyubiquitination) with RNF14; regulates AR transcriptional activity. Interacts with PRMT2 and TRIM24. Interacts with RACK1. Interacts with RANBP10; this interaction enhances dihydrotestosterone-induced AR transcriptional activity. Interacts with PRPF6 in a hormone-independent way; this interaction enhances dihydrotestosterone-induced AR transcriptional activity. Interacts with STK4/MST1. Interacts with ZIPK/DAPK3. Interacts with LPXN. Interacts with MAK. Part of a complex containing AR, MAK and NCOA3. Interacts with CRY1. Interacts with CCAR1 and GATA2. Interacts with ZNF318. Interacts with BUD31. Interacts with ARID4A. Interacts with ARID4B. Interacts (via NR LBD domain) with ZBTB7A; the interaction is direct and androgen-dependent. Interacts with NCOR1. Interacts with NCOR2. Interacts with CRY2 in a ligand-dependent manner. In terms of processing, phosphorylated in prostate cancer cells in response to several growth factors including EGF. Phosphorylation is induced by c-Src kinase (CSK). Tyr-499 is one of the major phosphorylation sites and an increase in phosphorylation and Src kinase activity is associated with prostate cancer progression. Phosphorylation by TNK2 enhances the DNA-binding and transcriptional activity. Phosphorylation at Ser-61 by CDK9 regulates AR promoter selectivity and cell growth. Sumoylated on Lys-367 (major) and Lys-485. Ubiquitinated. Deubiquitinated by USP26. 'Lys-6' and 'Lys-27'-linked polyubiquitination by RNF6 modulates AR transcriptional activity and specificity. Post-translationally, palmitoylated by ZDHHC7 and ZDHHC21. Palmitoylation is required for plasma membrane targeting and for rapid intracellular signaling via ERK and AKT kinases and cAMP generation.

It is found in the nucleus. Its subcellular location is the cytoplasm. In terms of biological role, steroid hormone receptors are ligand-activated transcription factors that regulate eukaryotic gene expression and affect cellular proliferation and differentiation in target tissues. Transcription factor activity is modulated by bound coactivator and corepressor proteins like ZBTB7A that recruits NCOR1 and NCOR2 to the androgen response elements/ARE on target genes, negatively regulating androgen receptor signaling and androgen-induced cell proliferation. Transcription activation is also down-regulated by NR0B2. Activated, but not phosphorylated, by HIPK3 and ZIPK/DAPK3. The protein is Androgen receptor (AR) of Eulemur fulvus collaris (Collared brown lemur).